The sequence spans 54 residues: Ovomucoid (54 aa).

Residues 4-54 (VDCSDYPKPACTVEYMPLCGSDNKTYGNKCNFCNAVVDSNGTLTLSHFGKC) form the Kazal-like domain. Disulfide bonds link C6-C36, C14-C33, and C22-C54. Residue N43 is glycosylated (N-linked (GlcNAc...) asparagine).

Its subcellular location is the secreted. The protein is Ovomucoid of Anser canagicus (Emperor goose).